Here is a 303-residue protein sequence, read N- to C-terminus: Hydroxyethylthiazole kinase (303 aa).

Residues 1–15 (MTTASTTPNSDTSNL) are compositionally biased toward polar residues. Residues 1–23 (MTTASTTPNSDTSNLHEVAPDDP) are disordered. Residue M67 participates in substrate binding. ATP is bound by residues R142 and S206. G233 serves as a coordination point for substrate.

It belongs to the Thz kinase family. Mg(2+) is required as a cofactor.

The catalysed reaction is 5-(2-hydroxyethyl)-4-methylthiazole + ATP = 4-methyl-5-(2-phosphooxyethyl)-thiazole + ADP + H(+). It participates in cofactor biosynthesis; thiamine diphosphate biosynthesis; 4-methyl-5-(2-phosphoethyl)-thiazole from 5-(2-hydroxyethyl)-4-methylthiazole: step 1/1. Catalyzes the phosphorylation of the hydroxyl group of 4-methyl-5-beta-hydroxyethylthiazole (THZ). The sequence is that of Hydroxyethylthiazole kinase from Bifidobacterium animalis subsp. lactis (strain AD011).